Here is a 189-residue protein sequence, read N- to C-terminus: Movement protein (189 aa).

This sequence belongs to the tombusvirus/aureusvirus movement protein p22 family. As to quaternary structure, interacts with host protein HFI22. In terms of processing, phosphorylated.

It localises to the host membrane. Functionally, transports viral genome to neighboring plant cells directly through plasmosdesmata, without any budding. The movement protein allows efficient cell to cell propagation, by bypassing the host cell wall barrier. This chain is Movement protein, found in Capsicum annuum (Capsicum pepper).